Consider the following 371-residue polypeptide: Glutamate 5-kinase (371 aa).

Lys11 serves as a coordination point for ATP. Substrate-binding residues include Ser52, Asp139, and Asn151. Residues 171–172 (TD) and 213–219 (TGGMATK) each bind ATP. In terms of domain architecture, PUA spans 278–356 (EGSLTLDEGA…AEIPYILGYE (79 aa)).

This sequence belongs to the glutamate 5-kinase family.

The protein resides in the cytoplasm. It carries out the reaction L-glutamate + ATP = L-glutamyl 5-phosphate + ADP. The protein operates within amino-acid biosynthesis; L-proline biosynthesis; L-glutamate 5-semialdehyde from L-glutamate: step 1/2. Catalyzes the transfer of a phosphate group to glutamate to form L-glutamate 5-phosphate. This chain is Glutamate 5-kinase, found in Synechococcus sp. (strain JA-3-3Ab) (Cyanobacteria bacterium Yellowstone A-Prime).